The primary structure comprises 399 residues: Elongation factor Tu 1 (399 aa).

The tr-type G domain occupies 17-208; the sequence is KPHVNVGTIG…LDDYVEVPPR (192 aa). The G1 stretch occupies residues 26–33; sequence GHVDHGKT. 26-33 contributes to the GTP binding site; it reads GHVDHGKT. Position 33 (Thr33) interacts with Mg(2+). The tract at residues 62 to 66 is G2; that stretch reads GITIA. The G3 stretch occupies residues 83–86; it reads DCPG. Residues 83-87 and 138-141 contribute to the GTP site; these read DCPGH and NKAD. The tract at residues 138–141 is G4; the sequence is NKAD. Positions 175 to 177 are G5; that stretch reads SAL.

Belongs to the TRAFAC class translation factor GTPase superfamily. Classic translation factor GTPase family. EF-Tu/EF-1A subfamily. In terms of assembly, monomer.

Its subcellular location is the cytoplasm. It catalyses the reaction GTP + H2O = GDP + phosphate + H(+). Its function is as follows. GTP hydrolase that promotes the GTP-dependent binding of aminoacyl-tRNA to the A-site of ribosomes during protein biosynthesis. The protein is Elongation factor Tu 1 of Wolbachia sp. subsp. Brugia malayi (strain TRS).